Reading from the N-terminus, the 117-residue chain is Small ribosomal subunit protein eS25 (117 aa).

The disordered stretch occupies residues 1–38 (MPPKKDAKSSAKQPQKTQKKKEGSGGGKAKKKKWSKGK). The span at 28–37 (KAKKKKWSKG) shows a compositional bias: basic residues.

This sequence belongs to the eukaryotic ribosomal protein eS25 family.

In Drosophila melanogaster (Fruit fly), this protein is Small ribosomal subunit protein eS25 (RpS25).